The primary structure comprises 627 residues: tRNA uridine 5-carboxymethylaminomethyl modification enzyme MnmG (627 aa).

FAD is bound by residues 16–21 (GAGHAG), Val-128, and Ser-183. Position 275 to 289 (275 to 289 (GPRYCPSIEDKVMRF)) interacts with NAD(+). Gln-372 provides a ligand contact to FAD.

The protein belongs to the MnmG family. As to quaternary structure, homodimer. Heterotetramer of two MnmE and two MnmG subunits. FAD serves as cofactor.

It is found in the cytoplasm. NAD-binding protein involved in the addition of a carboxymethylaminomethyl (cmnm) group at the wobble position (U34) of certain tRNAs, forming tRNA-cmnm(5)s(2)U34. The polypeptide is tRNA uridine 5-carboxymethylaminomethyl modification enzyme MnmG (Geobacter sulfurreducens (strain ATCC 51573 / DSM 12127 / PCA)).